The following is a 757-amino-acid chain: Polyribonucleotide nucleotidyltransferase (757 aa).

Aspartate 525 and aspartate 531 together coordinate Mg(2+). Residues 591–650 (PRVISVNIPVDKIGELIGPKGKTINAIQDETGADISIEEDGTVYIGAVDGPSADAARAQV) enclose the KH domain. The S1 motif domain maps to 662–734 (GESFLGTVVK…DRGKLSLAPV (73 aa)). The segment at 737-757 (ETADQEGRDAASHGSEAPAEG) is disordered.

This sequence belongs to the polyribonucleotide nucleotidyltransferase family. The cofactor is Mg(2+).

The protein localises to the cytoplasm. It carries out the reaction RNA(n+1) + phosphate = RNA(n) + a ribonucleoside 5'-diphosphate. Involved in mRNA degradation. Catalyzes the phosphorolysis of single-stranded polyribonucleotides processively in the 3'- to 5'-direction. This is Polyribonucleotide nucleotidyltransferase from Clavibacter michiganensis subsp. michiganensis (strain NCPPB 382).